The chain runs to 237 residues: Peroxisomal membrane protein 11-1 (237 aa).

The Cytoplasmic portion of the chain corresponds to M1–N92. The helical transmembrane segment at A93–Y113 threads the bilayer. Residues K114 to K204 lie on the Lumenal side of the membrane. Residues I205–Y223 form a helical membrane-spanning segment. At Q224 to A237 the chain is on the cytoplasmic side.

Belongs to the peroxin-11 family. Expressed in seedlings, leaf sheaths, flag leaf, panicles and spikelets.

Its subcellular location is the peroxisome membrane. Involved in peroxisomal proliferation. The chain is Peroxisomal membrane protein 11-1 (PEX11-1) from Oryza sativa subsp. japonica (Rice).